We begin with the raw amino-acid sequence, 176 residues long: Ribosome rescue factor SmrB (176 aa).

Positions 93–168 constitute a Smr domain; the sequence is LDLHGYRQSE…GDAALLVLID (76 aa).

Belongs to the SmrB family. Associates with collided ribosomes, but not with correctly translating polysomes.

Its function is as follows. Acts as a ribosome collision sensor. Detects stalled/collided disomes (pairs of ribosomes where the leading ribosome is stalled and a second ribosome has collided with it) and endonucleolytically cleaves mRNA at the 5' boundary of the stalled ribosome. Stalled/collided disomes form a new interface (primarily via the 30S subunits) that binds SmrB. Cleaved mRNA becomes available for tmRNA ligation, leading to ribosomal subunit dissociation and rescue of stalled ribosomes. In Shewanella sp. (strain ANA-3), this protein is Ribosome rescue factor SmrB.